The chain runs to 222 residues: MFGFRKPKMYRSIEGCCICRAKSSSSRFTDSKRYEKDFQNCFGLHEARSGDICNACVLLVKRWKKLPAGSKKNWNHVVDARAGPSLKTTLKPKKMKTLSGSRIKSNQISKLQKEFKRHNSDAHSTTSSASPAQSPCYSNQSDEGSDTEMSAGSSRTPVFSFLDLTYWKRQKVCCGIIYKGRFGEVLIDTHLFKPCCSNKKSATEKPEQEGPQSPAISTQEEW.

Residues 111 to 121 show a composition bias toward basic and acidic residues; sequence LQKEFKRHNSD. Disordered stretches follow at residues 111–154 and 199–222; these read LQKE…AGSS and KKSA…QEEW. A compositionally biased stretch (low complexity) spans 124 to 135; it reads STTSSASPAQSP. 2 stretches are compositionally biased toward polar residues: residues 136–154 and 210–222; these read CYSN…AGSS and GPQS…QEEW.

It belongs to the SINHCAF family. In terms of assembly, component of the Sin3/HDAC corepressor complex at least composed of BRMS1, BRMS1L, ING2, SAP30, SAP30L, HDAC1. Found in a complex composed of at least SINHCAF, SIN3A, HDAC1, SAP30, RBBP4, OGT and TET1.

The protein resides in the nucleus. Its function is as follows. Subunit of the Sin3 deacetylase complex (Sin3/HDAC), this subunit is important for the repression of genes encoding components of the TGF-beta signaling pathway. Core component of a SIN3A complex (composed of at least SINHCAF, SIN3A, HDAC1, SAP30, RBBP4, OGT and TET1) present in embryonic stem (ES) cells and is essential to maintain the complex on chromatin. This chain is SIN3-HDAC complex-associated factor (SINHCAF), found in Gallus gallus (Chicken).